Consider the following 569-residue polypeptide: Potassium-transporting ATPase potassium-binding subunit (569 aa).

A run of 10 helical transmembrane segments spans residues 5-25 (GWAE…PLGV), 65-85 (GYAG…YAVL), 135-155 (LVLT…AAAL), 179-199 (LYVL…LGLP), 254-274 (LTNL…FFAF), 286-306 (ALVI…YWTE), 383-403 (GIAV…LMVG), 422-442 (LLTV…AAVL), 489-509 (MGVA…AMAG), and 528-548 (GGLF…LQFF).

It belongs to the KdpA family. In terms of assembly, the system is composed of three essential subunits: KdpA, KdpB and KdpC.

Its subcellular location is the cell inner membrane. Its function is as follows. Part of the high-affinity ATP-driven potassium transport (or Kdp) system, which catalyzes the hydrolysis of ATP coupled with the electrogenic transport of potassium into the cytoplasm. This subunit binds the periplasmic potassium ions and delivers the ions to the membrane domain of KdpB through an intramembrane tunnel. This chain is Potassium-transporting ATPase potassium-binding subunit, found in Caulobacter sp. (strain K31).